Consider the following 662-residue polypeptide: ATP-dependent RNA helicase DDX3X (662 aa).

An N-acetylserine modification is found at S2. Positions 2–139 (SHVAVENALG…KSDEDDWSKP (138 aa)) are required for TBK1 and IKBKE-dependent IFNB1 activation. A Nuclear export signal motif is present at residues 12–21 (LDQQFAGLDL). The tract at residues 19–144 (LDLNSSDNQS…DWSKPLPPSE (126 aa)) is disordered. The segment covering 21–34 (LNSSDNQSGGSTAS) has biased composition (polar residues). An interaction with EIF4E region spans residues 38–44 (YIPPHLR). Over residues 44–68 (RNREATKGFYDKDSSGWSSSKDKDA) the composition is skewed to basic and acidic residues. K55 is modified (N6-acetyllysine). S82 and S90 each carry phosphoserine. Basic and acidic residues predominate over residues 94–130 (GRFDDRGRGDYDGIGGRGDRSGFGKFERGGNSRWCDK). The tract at residues 100 to 110 (GRGDYDGIGGR) is interaction with IKBKE. Positions 100-662 (GRGDYDGIGG…NSQGVDWWGN (563 aa)) are interaction with GSK3B. An Omega-N-methylarginine modification is found at R101. Position 104 is a phosphotyrosine (Y104). R110 is modified (omega-N-methylarginine). The residue at position 118 (K118) is an N6-acetyllysine. S131 carries the phosphoserine modification. The tract at residues 139-172 (PLPPSERLEQELFSGGNTGINFEKYDDIPVEATG) is interaction with CHUK. The Q motif motif lies at 180 to 208 (ESFSDVEMGEIIMGNIELTRYTRPTPVQK). The residue at position 183 (S183) is a Phosphoserine. 200 to 207 (YTRPTPVQ) serves as a coordination point for ATP. The 193-residue stretch at 211–403 (IPIIKEKRDL…RDFLDEYIFL (193 aa)) folds into the Helicase ATP-binding domain. A Glycyl lysine isopeptide (Lys-Gly) (interchain with G-Cter in SUMO2) cross-link involves residue K215. 224–231 (AQTGSGKT) is an ATP binding site. Residues 250–259 (ALRAMKENGR) are involved in stimulation of ATPase activity by DNA and RNA, nucleic acid binding and unwinding. The DEAD box motif lies at 347–350 (DEAD). Residues 414–575 (NITQKVVWVE…EVPSWLENMA (162 aa)) form the Helicase C-terminal domain. At S456 the chain carries Phosphoserine. Residues 536–661 (GNLGLATSFF…YNSQGVDWWG (126 aa)) form an interaction with NXF1 region. R592 is subject to Omega-N-methylarginine. Residues S594, S605, and S612 each carry the phosphoserine modification. A disordered region spans residues 601–633 (DYRQSSGASSSSFSSSRASSSRSGGGGHGGSRG). Over residues 604 to 622 (QSSGASSSSFSSSRASSSR) the composition is skewed to low complexity. 2 positions are modified to omega-N-methylarginine: R617 and R632. A compositionally biased stretch (gly residues) spans 623–633 (SGGGGHGGSRG).

The protein belongs to the DEAD box helicase family. DDX3/DED1 subfamily. Homodimer; can bind RNA as a monomer and as a dimer/oligomer. Interacts with TDRD3. When phosphorylated, interacts with IRF3; the interaction facilitates the phosphorylation and activation of IRF3 by IKBKE. Directly interacts with XPO1/CRM1. The interaction with XPO1/CMR1 is dependent on the DDX3X nuclear export signal motif and XPO1 interaction with GTPase RAN in its active GTP-bound form. Weakly interacts with TBKBP1/SINTBAD. Directly interacts with TRAF3; this interaction stimulates TRAF3 'Lys-63' ubiquitination. Interacts with CSNK1E in a Wnt-dependent manner; this interaction greatly enhances CSNK1E affinity for ATP, stimulates its kinase activity and promotes CSNK1E-mediated DVL2 phosphorylation. In the presence of RNA, the interaction is decreased. Also interacts with CSNK1D and stimulates its kinase activity. Interacts with TRPV4; this interaction is decreased when the TRPV4 channel is activated, leading to DDX3X relocalization to the nucleus. Interacts with MAP3K14/NIK. Directly interacts with CHUK/IKKA after physiological activation of the TLR7 and TLR8 pathways; this interaction enhances CHUK autophosphorylation. May associate with EIF4F complex, composed of at least EIF4A, EIF4E and EIF4G1/EIF4G3. Directly interacts with EIF4E in an RNA-independent manner; this interaction enhances EIF4E cap-binding ability. Directly interacts with EIF4G1 in an RNA-independent manner. DDX3X competes with EIF4G1 for interaction with EIF4E. Interacts with EIF4A1 and EIF2S1 in an RNA-independent manner. Associates with the eukaryotic translation initiation factor 3 (eIF-3) complex, including with EIF3B and EIF3C subunits. Directly interacts with IKBKE/IKKE; this interaction stimulates IKBKE activating autophosphorylation and is induced upon viral infection. Interacts with TBK1. Interacts with SP1; this interaction potentiates SP1-induced CDKN1A/WAF1/CIP1 transcription. Interacts with GSK3A and GSK3B. Interacts with several death receptors, inclusing FAS, TNFRSF10A and TNFRSF10B. Recruited to TNFRSF10B in the absence of receptor stimulation. When TNFRSF10B is stimulated, further recruited to the receptor and cleaved by caspases. A large proteolytic fragment remains associated with TNFRSF10B. Interacts (via C-terminus) with NXF1/TAP; this interaction may be partly involved in DDX3X nuclear export and in NXF1 localization to stress granules. Identified in an mRNP complex, composed of at least DHX9, DDX3X, ELAVL1, HNRNPU, IGF2BP1/2, ILF3, PABPC1, PCBP2, PTBP2, STAU1, STAU2, SYNCRIP and YBX1. The interaction with IGF2BP1/2 is RNA-dependent. Directly interacts with PABPC1/PABP1 in an RNA-independent manner. This interaction increases in stressed cells and decreases during cell recovery. Interacts (via C-terminus) with MAVS/IPS-1; this interaction potentiates MAVS-mediated IFNB induction. Interacts with ERCC6/CBS. Interacts with DHX33 in an RNA-independent manner. Interacts with DDX5 in the cytoplasm; this interaction may be more efficient when both proteins are unphosphorylated. Interacts with RIGI. Interacts with IFIH1/MDA5. Interacts with NCAPH; this interaction may be important for the NCAPH localization at condensing chromosomes during mitosis. Interacts with NLRP3 (via NACHT domain) under inflammasome-activating conditions. Interacts with CAPRIN1. Interacts with HNF4A and NR0B2/SHP in an RNA-independent manner; this interaction disrupts the interaction between HNF4 and NR0B2 that forms inactive heterodimers and enhances the formation of active HNF4 homodimers. Interacts with CREBBP/CBP. Interacts with EP300/p300. Interacts with gamma-tubulin. Interacts with phosphorylated TP53. Directly interacts with RELA/p65; this interaction may trap RELA in the cytoplasm, impairing nuclear relocalization upon TNF activating signals. In terms of processing, phosphorylated by TBK1; the phosphorylation is required for the synergistic induction of IFNB mediated by TBK1 and DDX3X. Phosphorylated by IKBKE. Also phosphorylated by CSNK1E; this phosphorylation may inhibit RNA-stimulated ATPase activity. Post-translationally, upon stimulation of death receptors, including TNFRSF10B, recruited to receptors and cleaved by caspases. Proteolytic fragments remain associated with the receptors. This cleavage presumably inactivates DDX3X anti-apoptotic function. Ubiquitinated by RNF39 via 'Lys-48'-linked ubiquitination; leading to proteasomal degradation. In terms of tissue distribution, expressed in ovary, including in germinal vesicle immature and metaphase II (MII) stage oocytes (at protein level). In the brain, expressed in the granule cells of the cerebellum and dentate gyrus, the pyramidal cells of the hippocampus, the ependymal cells lining the ventricles, choroid plexi and olfactory bulb. Also accumulates in the thalamic nuclei, the dorsal region of the colliculi and the pontine nucleus.

The protein localises to the cell membrane. It localises to the nucleus. The protein resides in the cytoplasm. Its subcellular location is the stress granule. It is found in the inflammasome. The protein localises to the cell projection. It localises to the lamellipodium. The catalysed reaction is ATP + H2O = ADP + phosphate + H(+). Multifunctional ATP-dependent RNA helicase. The ATPase activity can be stimulated by various ribo-and deoxynucleic acids indicative for a relaxed substrate specificity. In vitro can unwind partially double-stranded DNA with a preference for 5'-single-stranded DNA overhangs. Binds RNA G-quadruplex (rG4s) structures, including those located in the 5'-UTR of NRAS mRNA. Involved in many cellular processes, which do not necessarily require its ATPase/helicase catalytic activities. Involved in transcription regulation. Positively regulates CDKN1A/WAF1/CIP1 transcription in an SP1-dependent manner, hence inhibits cell growth. This function requires its ATPase, but not helicase activity. CDKN1A up-regulation may be cell-type specific. Binds CDH1/E-cadherin promoter and represses its transcription. Potentiates HNF4A-mediated MTTP transcriptional activation; this function requires ATPase, but not helicase activity. Facilitates HNF4A acetylation, possibly catalyzed by CREBBP/EP300, thereby increasing the DNA-binding affinity of HNF4 to its response element. In addition, disrupts the interaction between HNF4 and SHP that forms inactive heterodimers and enhances the formation of active HNF4 homodimers. By promoting HNF4A-induced MTTP expression, may play a role in lipid homeostasis. May positively regulate TP53 transcription. Associates with mRNPs, predominantly with spliced mRNAs carrying an exon junction complex (EJC). Involved in the regulation of translation initiation. Not involved in the general process of translation, but promotes efficient translation of selected complex mRNAs, containing highly structured 5'-untranslated regions (UTR). This function depends on helicase activity. Might facilitate translation by resolving secondary structures of 5'-UTRs during ribosome scanning. Alternatively, may act prior to 43S ribosomal scanning and promote 43S pre-initiation complex entry to mRNAs exhibiting specific RNA motifs, by performing local remodeling of transcript structures located close to the cap moiety. Independently of its ATPase activity, promotes the assembly of functional 80S ribosomes and disassembles from ribosomes prior to the translation elongation process. Positively regulates the translation of cyclin E1/CCNE1 mRNA and consequently promotes G1/S-phase transition during the cell cycle. May activate TP53 translation. Required for endoplasmic reticulum stress-induced ATF4 mRNA translation. Independently of its ATPase/helicase activity, enhances IRES-mediated translation; this activity requires interaction with EIF4E. Independently of its ATPase/helicase activity, has also been shown specifically repress cap-dependent translation, possibly by acting on translation initiation factor EIF4E. Involved in innate immunity, acting as a viral RNA sensor. Binds viral RNAs and promotes the production of type I interferon (IFN-alpha and IFN-beta). Potentiate MAVS/RIGI-mediated induction of IFNB in early stages of infection. Enhances IFNB1 expression via IRF3/IRF7 pathway and participates in NFKB activation in the presence of MAVS and TBK1. Involved in TBK1 and IKBKE-dependent IRF3 activation leading to IFNB induction, acts as a scaffolding adapter that links IKBKE and IRF3 and coordinates their activation. Involved in the TLR7/TLR8 signaling pathway leading to type I interferon induction, including IFNA4 production. In this context, acts as an upstream regulator of IRF7 activation by MAP3K14/NIK and CHUK/IKKA. Stimulates CHUK autophosphorylation and activation following physiological activation of the TLR7 and TLR8 pathways, leading to MAP3K14/CHUK-mediated activatory phosphorylation of IRF7. Also stimulates MAP3K14/CHUK-dependent NF-kappa-B signaling. Negatively regulates TNF-induced IL6 and IL8 expression, via the NF-kappa-B pathway. May act by interacting with RELA/p65 and trapping it in the cytoplasm. May also bind IFNB promoter; the function is independent of IRF3. Involved in both stress and inflammatory responses. Independently of its ATPase/helicase activity, required for efficient stress granule assembly through its interaction with EIF4E, hence promotes survival in stressed cells. Independently of its helicase activity, regulates NLRP3 inflammasome assembly through interaction with NLRP3 and hence promotes cell death by pyroptosis during inflammation. This function is independent of helicase activity. Therefore DDX3X availability may be used to interpret stress signals and choose between pro-survival stress granules and pyroptotic NLRP3 inflammasomes and serve as a live-or-die checkpoint in stressed cells. In association with GSK3A/B, negatively regulates extrinsic apoptotic signaling pathway via death domain receptors, including TNFRSF10B, slowing down the rate of CASP3 activation following death receptor stimulation. Cleavage by caspases may inactivate DDX3X and relieve the inhibition. Independently of its ATPase/helicase activity, allosteric activator of CSNK1E. Stimulates CSNK1E-mediated phosphorylation of DVL2, thereby involved in the positive regulation of Wnt/beta-catenin signaling pathway. Also activates CSNK1A1 and CSNK1D in vitro, but it is uncertain if these targets are physiologically relevant. ATPase and casein kinase-activating functions are mutually exclusive. May be involved in mitotic chromosome segregation. The polypeptide is ATP-dependent RNA helicase DDX3X (Ddx3x) (Mus musculus (Mouse)).